The primary structure comprises 200 residues: Orotate phosphoribosyltransferase (200 aa).

Residues Arg-95, Lys-99, His-101, and 121-129 (DDVATTGGS) each bind 5-phospho-alpha-D-ribose 1-diphosphate. The orotate site is built by Thr-125 and Arg-153.

This sequence belongs to the purine/pyrimidine phosphoribosyltransferase family. PyrE subfamily. Homodimer. Requires Mg(2+) as cofactor.

It carries out the reaction orotidine 5'-phosphate + diphosphate = orotate + 5-phospho-alpha-D-ribose 1-diphosphate. Its pathway is pyrimidine metabolism; UMP biosynthesis via de novo pathway; UMP from orotate: step 1/2. Its function is as follows. Catalyzes the transfer of a ribosyl phosphate group from 5-phosphoribose 1-diphosphate to orotate, leading to the formation of orotidine monophosphate (OMP). The sequence is that of Orotate phosphoribosyltransferase from Cenarchaeum symbiosum (strain A).